Here is a 217-residue protein sequence, read N- to C-terminus: MVGIIGKKLGMTTVFDETGNAIAVTVVEAGPCTVMQIRDNEKDGYSAIQLGYGAVKEKHLKKPQIGQFKKANLEPKKYLKEFRMDDASSYTVGQELKADIFQAGDFIDVSSLSKGRGFAGVMKRHNYDGGPMSHGSNFRRRAGSIGCNSYPARVWKGKGMPGHMGNTLTTIQNLKVVEIRPDDNLIMIKGAIPGAINSIVKLTSAVKKRNKKKNSMN.

Belongs to the universal ribosomal protein uL3 family. In terms of assembly, part of the 50S ribosomal subunit. Forms a cluster with proteins L14 and L19.

Functionally, one of the primary rRNA binding proteins, it binds directly near the 3'-end of the 23S rRNA, where it nucleates assembly of the 50S subunit. This Brachyspira hyodysenteriae (strain ATCC 49526 / WA1) protein is Large ribosomal subunit protein uL3.